A 943-amino-acid chain; its full sequence is Isoleucine--tRNA ligase (943 aa).

A 'HIGH' region motif is present at residues 58 to 68 (PYANGSIHIGH). Residue Glu-567 participates in L-isoleucyl-5'-AMP binding. The 'KMSKS' region signature appears at 608–612 (KMSKS). Lys-611 provides a ligand contact to ATP. Residues Cys-906, Cys-909, Cys-926, and Cys-929 each coordinate Zn(2+).

This sequence belongs to the class-I aminoacyl-tRNA synthetase family. IleS type 1 subfamily. In terms of assembly, monomer. The cofactor is Zn(2+).

The protein localises to the cytoplasm. It catalyses the reaction tRNA(Ile) + L-isoleucine + ATP = L-isoleucyl-tRNA(Ile) + AMP + diphosphate. Functionally, catalyzes the attachment of isoleucine to tRNA(Ile). As IleRS can inadvertently accommodate and process structurally similar amino acids such as valine, to avoid such errors it has two additional distinct tRNA(Ile)-dependent editing activities. One activity is designated as 'pretransfer' editing and involves the hydrolysis of activated Val-AMP. The other activity is designated 'posttransfer' editing and involves deacylation of mischarged Val-tRNA(Ile). The sequence is that of Isoleucine--tRNA ligase from Pseudomonas fluorescens (strain ATCC BAA-477 / NRRL B-23932 / Pf-5).